The primary structure comprises 763 residues: Xaa-Pro dipeptidyl-peptidase (763 aa).

Catalysis depends on charge relay system residues Ser348, Asp468, and His498.

Belongs to the peptidase S15 family. Homodimer.

It localises to the cytoplasm. It catalyses the reaction Hydrolyzes Xaa-Pro-|- bonds to release unblocked, N-terminal dipeptides from substrates including Ala-Pro-|-p-nitroanilide and (sequentially) Tyr-Pro-|-Phe-Pro-|-Gly-Pro-|-Ile.. Its function is as follows. Removes N-terminal dipeptides sequentially from polypeptides having unsubstituted N-termini provided that the penultimate residue is proline. The sequence is that of Xaa-Pro dipeptidyl-peptidase (pepX) from Lactococcus lactis subsp. lactis (strain IL1403) (Streptococcus lactis).